We begin with the raw amino-acid sequence, 154 residues long: uncharacterized protein (154 aa).

Positions 91 to 154 (PSEESWGCRQ…WGSPQPSRGA (64 aa)) are disordered. Residues 134–154 (SRDTSPLGGQSWGSPQPSRGA) show a composition bias toward polar residues.

This is an uncharacterized protein from Homo sapiens (Human).